Here is a 362-residue protein sequence, read N- to C-terminus: Probable prephenate dehydrogenase NovF (362 aa).

The Prephenate/arogenate dehydrogenase domain occupies 2–283 (RTAVIIGTGM…GIDGSNRVPG (282 aa)).

The protein belongs to the prephenate/arogenate dehydrogenase family.

The catalysed reaction is prephenate + NAD(+) = 3-(4-hydroxyphenyl)pyruvate + CO2 + NADH. It functions in the pathway antibiotic biosynthesis; novobiocin biosynthesis. Its function is as follows. Probable prephenate dehydrogenase that produces 4-hydroxyphenylpyruvate (4HPP) in the novobiocin biosynthesis pathway. Novobiocin is an aminocoumarin family antibiotic that targets bacterial DNA gyrases. The protein is Probable prephenate dehydrogenase NovF (novF) of Streptomyces niveus (Streptomyces spheroides).